An 89-amino-acid chain; its full sequence is Small ribosomal subunit protein uS17 (89 aa).

It belongs to the universal ribosomal protein uS17 family. In terms of assembly, part of the 30S ribosomal subunit.

Its function is as follows. One of the primary rRNA binding proteins, it binds specifically to the 5'-end of 16S ribosomal RNA. The sequence is that of Small ribosomal subunit protein uS17 from Bdellovibrio bacteriovorus (strain ATCC 15356 / DSM 50701 / NCIMB 9529 / HD100).